The following is a 354-amino-acid chain: Carbonic anhydrase 12 (354 aa).

An N-terminal signal peptide occupies residues 1–24 (MPRRSLHAAAVLLLVILKEQPSSP). Over 25–301 (APVNGSKWTY…VQVCTAAGLS (277 aa)) the chain is Extracellular. 2 N-linked (GlcNAc...) asparagine glycosylation sites follow: N28 and N80. In terms of domain architecture, Alpha-carbonic anhydrase spans 30 to 289 (SKWTYFGPDG…FDERLVYTSF (260 aa)). C50 and C230 are oxidised to a cystine. Residue H94 is the Proton donor/acceptor of the active site. Zn(2+) contacts are provided by H119, H121, and H145. Residue N162 is glycosylated (N-linked (GlcNAc...) asparagine). Position 226–227 (226–227 (TT)) interacts with substrate. Residues 302–322 (LGIILSLALAGILGICIVVVV) traverse the membrane as a helical segment. The Cytoplasmic portion of the chain corresponds to 323–354 (SIWLFRRKSIKKGDNKGVIYKPATKMETEAHA).

Belongs to the alpha-carbonic anhydrase family. Homodimer. Zn(2+) is required as a cofactor. In terms of tissue distribution, highly expressed in colon, kidney, prostate, intestine and activated lymphocytes. Expressed at much higher levels in the renal cell cancers than in surrounding normal kidney tissue. Moderately expressed in pancreas, ovary and testis. Expressed in sweat glands and bronchiolar epithelium.

It localises to the membrane. The protein localises to the cell membrane. It catalyses the reaction hydrogencarbonate + H(+) = CO2 + H2O. Inhibited by coumarins, saccharin, sulfonamide derivatives such as acetazolamide (AZA), benzenesulfonamide and derivatives (4-carboxyethylbenzene-sulfonamide, 4-carboxyethylbenzene-sulfonamide ethyl ester, 4-(acetyl-2-aminoethyl)benzene-sulfonamide, 4-aminoethylbenzene-sulfonamide) and Foscarnet (phosphonoformate trisodium salt). Functionally, reversible hydration of carbon dioxide. This chain is Carbonic anhydrase 12, found in Homo sapiens (Human).